The primary structure comprises 266 residues: Orotidine 5'-phosphate decarboxylase (266 aa).

Substrate is bound by residues aspartate 37, 59-61, 91-100, tyrosine 217, and arginine 235; these read KTH and DRKFADIGNT. The active-site Proton donor is lysine 93.

Belongs to the OMP decarboxylase family.

It carries out the reaction orotidine 5'-phosphate + H(+) = UMP + CO2. The protein operates within pyrimidine metabolism; UMP biosynthesis via de novo pathway; UMP from orotate: step 2/2. The polypeptide is Orotidine 5'-phosphate decarboxylase (URA3) (Cyberlindnera jadinii (Torula yeast)).